The sequence spans 425 residues: 5-nitroanthranilic acid aminohydrolase (425 aa).

D88 is a catalytic residue. The Proton acceptor role is filled by E158.

Belongs to the peptidase M20A family. Co(2+) serves as cofactor. The cofactor is Mn(2+). Requires Zn(2+) as cofactor. Fe(2+) is required as a cofactor. It depends on Ni(2+) as a cofactor.

The enzyme catalyses 5-nitroanthranilate + H2O + H(+) = 5-nitrosalicylate + NH4(+). In terms of biological role, catalyzes the deamination of 5-nitroanthranilate (5NAA) to 5-nitrosalicylate (5NSA), the first step in biodegradation of 5-nitroanthranilate. The chain is 5-nitroanthranilic acid aminohydrolase (naaA) from Bradyrhizobium sp.